Here is a 263-residue protein sequence, read N- to C-terminus: 3-deoxy-manno-octulosonate cytidylyltransferase (263 aa).

Belongs to the KdsB family.

The protein localises to the cytoplasm. It carries out the reaction 3-deoxy-alpha-D-manno-oct-2-ulosonate + CTP = CMP-3-deoxy-beta-D-manno-octulosonate + diphosphate. Its pathway is nucleotide-sugar biosynthesis; CMP-3-deoxy-D-manno-octulosonate biosynthesis; CMP-3-deoxy-D-manno-octulosonate from 3-deoxy-D-manno-octulosonate and CTP: step 1/1. The protein operates within bacterial outer membrane biogenesis; lipopolysaccharide biosynthesis. In terms of biological role, activates KDO (a required 8-carbon sugar) for incorporation into bacterial lipopolysaccharide in Gram-negative bacteria. In Burkholderia cenocepacia (strain HI2424), this protein is 3-deoxy-manno-octulosonate cytidylyltransferase.